Here is a 427-residue protein sequence, read N- to C-terminus: Glucan 1,3-beta-glucosidase 2 (427 aa).

A signal peptide spans 1–17; that stretch reads MLISTFIISSLLSIALA. The active-site Proton donor is the glutamate 217. Disulfide bonds link cysteine 299-cysteine 426 and cysteine 324-cysteine 355. Residue glutamate 316 is the Nucleophile of the active site.

This sequence belongs to the glycosyl hydrolase 5 (cellulase A) family.

It is found in the secreted. The enzyme catalyses Successive hydrolysis of beta-D-glucose units from the non-reducing ends of (1-&gt;3)-beta-D-glucans, releasing alpha-glucose.. Functionally, beta-glucanases participate in the metabolism of beta-glucan, the main structural component of the cell wall. It could also function biosynthetically as a transglycosylase. This chain is Glucan 1,3-beta-glucosidase 2 (EXG2), found in Wickerhamomyces anomalus (Yeast).